Here is a 68-residue protein sequence, read N- to C-terminus: Phylloseptin-SP1 (68 aa).

The first 22 residues, 1–22, serve as a signal peptide directing secretion; that stretch reads MAFLKKSLFLVLFLGLVSLSIC. Residues 23–45 constitute a propeptide that is removed on maturation; the sequence is EEKERETKEEENEQEDDNREEKR. The residue at position 67 (Leu-67) is a Leucine amide.

As to expression, expressed by the skin glands.

The protein localises to the secreted. Functionally, weak cationic amphipathic alpha-helical antimicrobial peptide with weak activity against Gram-positive and Gram-negative bacteria and fungi. Has been tested against E.coli (MIC&gt;217.69 uM), S.aureus (MIC&gt;217.69 uM), K.pneumoniae (MIC&gt;189.00 uM) and C.albicans (MIC&gt;217.69 uM). Shows a moderate hemolytic activity. The protein is Phylloseptin-SP1 of Agalychnis spurrelli (Gliding leaf frog).